The sequence spans 500 residues: Allene oxide synthase 3 (500 aa).

Residues 1–26 form a disordered region; sequence MAPPPVNSGDAAAAATGEKSKLSPSG. Residues 297-298, Lys-304, and 365-368 contribute to the substrate site; these read FN and PVEF. Cys-452 lines the heme pocket.

Belongs to the cytochrome P450 family. Heme is required as a cofactor. Not expressed in dark-grown seedlings.

The catalysed reaction is (13S)-hydroperoxy-(9Z,11E,15Z)-octadecatrienoate = (9Z,13S,15Z)-12,13-epoxyoctadeca-9,11,15-trienoate + H2O. It functions in the pathway lipid metabolism; oxylipin biosynthesis. In terms of biological role, involved in the biosynthesis of jasmonic acid, a growth regulator that is implicated also as a signaling molecule in plant defense. Converts 13-hydroperoxylinolenic acid to 12,13-epoxylinolenic acid. In Oryza sativa subsp. japonica (Rice), this protein is Allene oxide synthase 3 (CYP74A3).